Here is a 139-residue protein sequence, read N- to C-terminus: Large ribosomal subunit protein uL16 (139 aa).

Basic residues predominate over residues 1-20; that stretch reads MLIPKRTKYRKQHRPVRRGM. The tract at residues 1–21 is disordered; the sequence is MLIPKRTKYRKQHRPVRRGMS.

This sequence belongs to the universal ribosomal protein uL16 family. As to quaternary structure, part of the 50S ribosomal subunit.

In terms of biological role, binds 23S rRNA and is also seen to make contacts with the A and possibly P site tRNAs. This is Large ribosomal subunit protein uL16 from Bifidobacterium adolescentis (strain ATCC 15703 / DSM 20083 / NCTC 11814 / E194a).